A 152-amino-acid polypeptide reads, in one-letter code: Aspartate carbamoyltransferase regulatory chain (152 aa).

Cys108, Cys113, Cys137, and Cys140 together coordinate Zn(2+).

This sequence belongs to the PyrI family. Contains catalytic and regulatory chains. The cofactor is Zn(2+).

Functionally, involved in allosteric regulation of aspartate carbamoyltransferase. The chain is Aspartate carbamoyltransferase regulatory chain from Neisseria meningitidis serogroup B (strain ATCC BAA-335 / MC58).